The primary structure comprises 456 residues: MDKRFAVVLAAGQGTRMKSKLYKVLHPVCGKPMVEHVVDEARKLSLEKLVTIVGHGAEDVKKQLGEKSEYALQAEQLGTAHAVKQAKSILGSEKGTTIVICGDTPLLTAETMEAMLTEHQKKAAKVTILTAVAEDPTGYGRIIRNENGDVAKIVEHKDATEEERLVKEINTGTYCFDNEALFQTIEQVSNDNVQGEYYLPDVIEILKNQGETVAAYQTVNFQETLGVNDRVALSQAEIYMKQRINKRHMQNGVSLIDPDNTYISPEAVIGRDTVIYPGTVIKGRVVIGEDAVIGQNSELENSTVGSRTVIKQSVIVDSEVGDDVTIGPFAHIRPDSKIGNEVRIGNFVEVKKSEFGDRSKASHLSYIGDAEIGTDVNLGCGSITVNYDGKHKFKTKIENGAFIGCNSNLVAPVTIGEGAYVAAGSTITDDVPGRALSIARARQVNKEDYAENIHKK.

The segment at 1-230 (MDKRFAVVLA…FQETLGVNDR (230 aa)) is pyrophosphorylase. UDP-N-acetyl-alpha-D-glucosamine is bound by residues 9–12 (LAAG), K23, Q73, and 78–79 (GT). Position 103 (D103) interacts with Mg(2+). UDP-N-acetyl-alpha-D-glucosamine contacts are provided by G140, E155, N170, and N228. A Mg(2+)-binding site is contributed by N228. The segment at 231–251 (VALSQAEIYMKQRINKRHMQN) is linker. An N-acetyltransferase region spans residues 252-456 (GVSLIDPDNT…EDYAENIHKK (205 aa)). UDP-N-acetyl-alpha-D-glucosamine contacts are provided by R333 and K351. H363 serves as the catalytic Proton acceptor. UDP-N-acetyl-alpha-D-glucosamine contacts are provided by Y366 and N377. Acetyl-CoA is bound by residues 386–387 (NY), A423, and R440.

The protein in the N-terminal section; belongs to the N-acetylglucosamine-1-phosphate uridyltransferase family. It in the C-terminal section; belongs to the transferase hexapeptide repeat family. In terms of assembly, homotrimer. It depends on Mg(2+) as a cofactor.

The protein resides in the cytoplasm. It carries out the reaction alpha-D-glucosamine 1-phosphate + acetyl-CoA = N-acetyl-alpha-D-glucosamine 1-phosphate + CoA + H(+). It catalyses the reaction N-acetyl-alpha-D-glucosamine 1-phosphate + UTP + H(+) = UDP-N-acetyl-alpha-D-glucosamine + diphosphate. It functions in the pathway nucleotide-sugar biosynthesis; UDP-N-acetyl-alpha-D-glucosamine biosynthesis; N-acetyl-alpha-D-glucosamine 1-phosphate from alpha-D-glucosamine 6-phosphate (route II): step 2/2. Its pathway is nucleotide-sugar biosynthesis; UDP-N-acetyl-alpha-D-glucosamine biosynthesis; UDP-N-acetyl-alpha-D-glucosamine from N-acetyl-alpha-D-glucosamine 1-phosphate: step 1/1. It participates in bacterial outer membrane biogenesis; LPS lipid A biosynthesis. Catalyzes the last two sequential reactions in the de novo biosynthetic pathway for UDP-N-acetylglucosamine (UDP-GlcNAc). The C-terminal domain catalyzes the transfer of acetyl group from acetyl coenzyme A to glucosamine-1-phosphate (GlcN-1-P) to produce N-acetylglucosamine-1-phosphate (GlcNAc-1-P), which is converted into UDP-GlcNAc by the transfer of uridine 5-monophosphate (from uridine 5-triphosphate), a reaction catalyzed by the N-terminal domain. This is Bifunctional protein GlmU from Bacillus licheniformis (strain ATCC 14580 / DSM 13 / JCM 2505 / CCUG 7422 / NBRC 12200 / NCIMB 9375 / NCTC 10341 / NRRL NRS-1264 / Gibson 46).